The following is a 123-amino-acid chain: Protein Wnt-3a (123 aa).

Ser1 carries the O-palmitoleoyl serine lipid modification. A disulfide bridge connects residues Cys89 and Cys104. N-linked (GlcNAc...) asparagine glycosylation is present at Asn90.

The protein belongs to the Wnt family. Post-translationally, disulfide bonds have critical and distinct roles in secretion and activity. Loss of each conserved cysteine results in high molecular weight oxidized Wnt oligomers, which are formed through inter-Wnt disulfide bonding. Palmitoleoylation is required for efficient binding to frizzled receptors. Depalmitoleoylation leads to Wnt signaling pathway inhibition.

It localises to the secreted. The protein resides in the extracellular space. The protein localises to the extracellular matrix. Its function is as follows. Ligand for members of the frizzled family of seven transmembrane receptors. Functions in the canonical Wnt signaling pathway that results in activation of transcription factors of the TCF/LEF family. Required for normal embryonic mesoderm development and formation of caudal somites. Required for normal morphogenesis of the developing neural tube. The polypeptide is Protein Wnt-3a (WNT3A) (Meleagris gallopavo (Wild turkey)).